Reading from the N-terminus, the 316-residue chain is MRILLANPRGFCAGVDRAISIVERALEIYGAPIYVRHEVVHNRYVVDTLRQRGAIFIEQITEVPDGSILIFSAHGVSQAVRAEARSRDLTVFDATCPLVTKVHMEVARASRKGTEAILIGHTGHPEVEGTMGQYNNPAGGMYLVESPEDVWQLEVKNVDNLCFMTQTTLSVDDTSDVIDALRARFPAIIGPRKDDICYATTNRQEAVRSLAADADVVLVVGSKNSSNSNRLSELAQRVGKPAYLIDSAGDIQESWLQGTQTIGVTAGASAPDILVQQVIERLRLLGAEGAKELIGREENIVFEVPKELRLEVKTVE.

Residue Cys-12 participates in [4Fe-4S] cluster binding. Positions 41 and 74 each coordinate (2E)-4-hydroxy-3-methylbut-2-enyl diphosphate. Dimethylallyl diphosphate contacts are provided by His-41 and His-74. Isopentenyl diphosphate is bound by residues His-41 and His-74. Residue Cys-96 participates in [4Fe-4S] cluster binding. (2E)-4-hydroxy-3-methylbut-2-enyl diphosphate is bound at residue His-124. His-124 contributes to the dimethylallyl diphosphate binding site. His-124 contacts isopentenyl diphosphate. The Proton donor role is filled by Glu-126. Thr-167 is a binding site for (2E)-4-hydroxy-3-methylbut-2-enyl diphosphate. A [4Fe-4S] cluster-binding site is contributed by Cys-197. 4 residues coordinate (2E)-4-hydroxy-3-methylbut-2-enyl diphosphate: Ser-225, Ser-226, Asn-227, and Ser-269. Dimethylallyl diphosphate is bound by residues Ser-225, Ser-226, Asn-227, and Ser-269. Residues Ser-225, Ser-226, Asn-227, and Ser-269 each coordinate isopentenyl diphosphate.

The protein belongs to the IspH family. Homodimer. The cofactor is [4Fe-4S] cluster.

The enzyme catalyses isopentenyl diphosphate + 2 oxidized [2Fe-2S]-[ferredoxin] + H2O = (2E)-4-hydroxy-3-methylbut-2-enyl diphosphate + 2 reduced [2Fe-2S]-[ferredoxin] + 2 H(+). It catalyses the reaction dimethylallyl diphosphate + 2 oxidized [2Fe-2S]-[ferredoxin] + H2O = (2E)-4-hydroxy-3-methylbut-2-enyl diphosphate + 2 reduced [2Fe-2S]-[ferredoxin] + 2 H(+). The protein operates within isoprenoid biosynthesis; dimethylallyl diphosphate biosynthesis; dimethylallyl diphosphate from (2E)-4-hydroxy-3-methylbutenyl diphosphate: step 1/1. Its pathway is isoprenoid biosynthesis; isopentenyl diphosphate biosynthesis via DXP pathway; isopentenyl diphosphate from 1-deoxy-D-xylulose 5-phosphate: step 6/6. In terms of biological role, catalyzes the conversion of 1-hydroxy-2-methyl-2-(E)-butenyl 4-diphosphate (HMBPP) into a mixture of isopentenyl diphosphate (IPP) and dimethylallyl diphosphate (DMAPP). Acts in the terminal step of the DOXP/MEP pathway for isoprenoid precursor biosynthesis. This is 4-hydroxy-3-methylbut-2-enyl diphosphate reductase from Sodalis glossinidius (strain morsitans).